The following is a 552-amino-acid chain: Acyl-CoA-dependent acyltransferase MAC1 (552 aa).

This sequence belongs to the trichothecene O-acetyltransferase family.

It participates in secondary metabolite biosynthesis. In terms of biological role, acyl-CoA-dependent acyltransferase; part of the gene cluster that mediates the biosynthesis of mannosylerythritol lipids (MELs), surface-active substances that enhance the availability of water-insoluble substrates. Depending on the number of acetyl groups, mannosylerythritol lipids can be differentiated into MEL A (fully acetylated), MEL B and MEL C (monoacetylated at R-6 and R-4, respectively), and the fully deacetylated MEL D. The first step in the pathway is the generation of mannosylerythritol by the glycosyltransferase EMT1 which catalyzes the transfer of GDP-mannose to the C-4 atom of meso-erythritol. This reaction has to be stereospecific, since only mannosyl-D-erythritol is generated. The produced disaccharide is subsequently acylated with fatty acids of various lengths by the acyltransferases MAC1 and MAC2 at positions C-2 and C-3, repectively. The existence of MEL derivatives which carry an acetyl group at C-2 implies that at least MAC1 also accepts acetyl-CoA as a donor. The final step of MEL biosynthesis is the acetylation of the fully acylated mannosylerythritol lipids catalyzed by the acetyl-CoA-dependent acetyltransferase MAT1. MAT1 displays a relaxed regioselectivity and is able to transfer acetylgroups to both positions C-4 and C-6 of the mannosyl moiety. The chain is Acyl-CoA-dependent acyltransferase MAC1 from Pseudozyma antarctica (strain T-34) (Yeast).